The chain runs to 96 residues: Non-specific lipid-transfer protein 2 (96 aa).

Positions 1 to 27 (MMRRLAVLVLAVAMVAACGGGVVGVAG) are cleaved as a signal peptide. Disulfide bonds link cysteine 30-cysteine 62, cysteine 38-cysteine 52, cysteine 53-cysteine 88, and cysteine 64-cysteine 95.

The protein belongs to the plant LTP family. B11E subfamily.

Its function is as follows. Transfer lipids across membranes. May play a role in plant defense or in the biosynthesis of cuticle layers. In Oryza sativa subsp. indica (Rice), this protein is Non-specific lipid-transfer protein 2 (LTP-2).